We begin with the raw amino-acid sequence, 470 residues long: Desmin (470 aa).

Residues 2 to 108 (SQAYSSSQRV…QEFLTTRTNE (107 aa)) are head. Residue Ser7 is modified to Phosphoserine; by CDK1. Position 12 is a phosphoserine; by AURKB (Ser12). Omega-N-methylarginine is present on Arg16. Thr17 carries the post-translational modification Phosphothreonine; by AURKB and ROCK1. Ser28 carries the phosphoserine; by CDK1 modification. Ser31 is subject to Phosphoserine. Position 32 is a phosphoserine; by CDK1 (Ser32). The residue at position 37 (Arg37) is an Asymmetric dimethylarginine; alternate. Arg37 is subject to Omega-N-methylarginine; alternate. A Phosphoserine modification is found at Ser45. Arg58 bears the ADP-ribosylarginine mark. Ser60 is subject to Phosphoserine; by AURKB. Arg70 carries the omega-N-methylarginine modification. Thr77 is modified (phosphothreonine; by ROCK1). A Phosphoserine modification is found at Ser81. The 309-residue stretch at 108 to 416 (EKVELQELND…KLLEGEESRI (309 aa)) folds into the IF rod domain. The interval 109 to 141 (KVELQELNDRFANYIEKVRFLEQQNAALAAEVN) is coil 1A. The segment at 142–151 (RLKGREPTRV) is linker 1. A coil 1B region spans residues 152–252 (AEIYEEELRE…HEEEIRELQA (101 aa)). Residues 253–268 (QLQEQQVQVEMDMSKP) form a linker 12 region. The interval 268-415 (PDLTAALRDI…RKLLEGEESR (148 aa)) is interaction with NEB. Positions 269 to 287 (DLTAALRDIRAQYETIAAK) are coil 2A. The interval 288-295 (NISEAEEW) is linker 2. 4 positions are modified to phosphoserine: Ser290, Ser358, Ser361, and Ser424. Residues 296–412 (YKSKVSDLTQ…ATYRKLLEGE (117 aa)) form a coil 2B region. The segment at 413–470 (ESRINLPIQTFSALNFRETSPEQRGSEVHTKKTVMIKTIETRDGEVVSEATQQQHEVL) is tail. The tract at residues 438–453 (SEVHTKKTVMIKTIET) is interaction with CRYAB.

Belongs to the intermediate filament family. Homomer. Interacts with DST. Interacts with MTM1. Interacts with EPPK1; interaction is dependent of higher-order structure of intermediate filament. Interacts with CRYAB. Interacts with NEB (via nebulin repeats 160-164). Interacts (via rod region) with NEBL (via nebulin repeats 1-5). Interacts with ASB2; the interaction targets DES for proteasomal degradation. Interacts with PKP1. Interacts with FLII. In terms of processing, ADP-ribosylation prevents ability to form intermediate filaments. Phosphorylation at Ser-7, Ser-28 and Ser-32 by CDK1 and phosphorylation at Ser-60 by AURKB contribute to efficient separation of desmin intermediate filaments during mitosis. Post-translationally, ubiquitination by a SCF-like complex containing ASB2 leads to proteasomal degradation.

It is found in the cytoplasm. The protein resides in the myofibril. The protein localises to the sarcomere. Its subcellular location is the z line. It localises to the cell membrane. It is found in the sarcolemma. The protein resides in the nucleus. The protein localises to the cell tip. Its subcellular location is the nucleus envelope. Its function is as follows. Muscle-specific type III intermediate filament essential for proper muscular structure and function. Plays a crucial role in maintaining the structure of sarcomeres, inter-connecting the Z-disks and forming the myofibrils, linking them not only to the sarcolemmal cytoskeleton, but also to the nucleus and mitochondria, thus providing strength for the muscle fiber during activity. In adult striated muscle they form a fibrous network connecting myofibrils to each other and to the plasma membrane from the periphery of the Z-line structures. May act as a sarcomeric microtubule-anchoring protein: specifically associates with detyrosinated tubulin-alpha chains, leading to buckled microtubules and mechanical resistance to contraction. Required for nuclear membrane integrity, via anchoring at the cell tip and nuclear envelope, resulting in maintenance of microtubule-derived intracellular mechanical forces. Contributes to the transcriptional regulation of the NKX2-5 gene in cardiac progenitor cells during a short period of cardiomyogenesis and in cardiac side population stem cells in the adult. Plays a role in maintaining an optimal conformation of nebulette (NEB) on heart muscle sarcomeres to bind and recruit cardiac alpha-actin. This chain is Desmin (DES), found in Bos taurus (Bovine).